Here is a 403-residue protein sequence, read N- to C-terminus: S-adenosylmethionine sensor upstream of mTORC1 (403 aa).

Over residues 1–10 (MEPGPGGRGA) the composition is skewed to gly residues. Residues 1–32 (MEPGPGGRGAARGQRPPNAAQPREQERKLEQE) form a disordered region. The span at 11-22 (ARGQRPPNAAQP) shows a compositional bias: low complexity. Positions 23 to 32 (REQERKLEQE) are enriched in basic and acidic residues. The S-adenosyl-L-methionine site is built by R93, G170, D188, D200, F201, and S242.

The protein belongs to the BMT2/SAMTOR family. Interacts with the GATOR1 complex; interaction is disrupted when SAMTOR binds S-adenosyl-L-methionine. Interacts with the KICSTOR complex; interaction is disrupted when SAMTOR binds S-adenosyl-L-methionine.

S-adenosyl-L-methionine-binding protein that acts as an inhibitor of mTORC1 signaling via interaction with the GATOR1 and KICSTOR complexes. Acts as a sensor of S-adenosyl-L-methionine to signal methionine sufficiency to mTORC1: in presence of methionine, binds S-adenosyl-L-methionine, leading to disrupt interaction with the GATOR1 and KICSTOR complexes and promote mTORC1 signaling. Upon methionine starvation, S-adenosyl-L-methionine levels are reduced, thereby promoting the association with GATOR1 and KICSTOR, leading to inhibit mTORC1 signaling. Probably also acts as a S-adenosyl-L-methionine-dependent methyltransferase. This is S-adenosylmethionine sensor upstream of mTORC1 from Mus musculus (Mouse).